An 853-amino-acid polypeptide reads, in one-letter code: DNA mismatch repair protein MutS (853 aa).

An ATP-binding site is contributed by 616-623 (GPNMGGKS).

This sequence belongs to the DNA mismatch repair MutS family.

This protein is involved in the repair of mismatches in DNA. It is possible that it carries out the mismatch recognition step. This protein has a weak ATPase activity. This is DNA mismatch repair protein MutS from Erwinia tasmaniensis (strain DSM 17950 / CFBP 7177 / CIP 109463 / NCPPB 4357 / Et1/99).